The chain runs to 417 residues: Gamma-glutamyl phosphate reductase (417 aa).

This sequence belongs to the gamma-glutamyl phosphate reductase family.

The protein localises to the cytoplasm. The enzyme catalyses L-glutamate 5-semialdehyde + phosphate + NADP(+) = L-glutamyl 5-phosphate + NADPH + H(+). It functions in the pathway amino-acid biosynthesis; L-proline biosynthesis; L-glutamate 5-semialdehyde from L-glutamate: step 2/2. Its function is as follows. Catalyzes the NADPH-dependent reduction of L-glutamate 5-phosphate into L-glutamate 5-semialdehyde and phosphate. The product spontaneously undergoes cyclization to form 1-pyrroline-5-carboxylate. The chain is Gamma-glutamyl phosphate reductase from Escherichia coli O45:K1 (strain S88 / ExPEC).